We begin with the raw amino-acid sequence, 315 residues long: Ribonuclease Z (315 aa).

The Zn(2+) site is built by His-61, His-63, Asp-65, His-66, His-151, Asp-219, and His-278. Asp-65 acts as the Proton acceptor in catalysis.

This sequence belongs to the RNase Z family. As to quaternary structure, homodimer. Zn(2+) serves as cofactor.

It catalyses the reaction Endonucleolytic cleavage of RNA, removing extra 3' nucleotides from tRNA precursor, generating 3' termini of tRNAs. A 3'-hydroxy group is left at the tRNA terminus and a 5'-phosphoryl group is left at the trailer molecule.. Its function is as follows. Zinc phosphodiesterase, which displays some tRNA 3'-processing endonuclease activity. Probably involved in tRNA maturation, by removing a 3'-trailer from precursor tRNA. In Clostridium botulinum (strain Eklund 17B / Type B), this protein is Ribonuclease Z.